The following is a 642-amino-acid chain: Kinesin-like protein KIF12 (642 aa).

Residues 1 to 13 (MEERGSPDGDPAR) are compositionally biased toward basic and acidic residues. The segment at 1–25 (MEERGSPDGDPARNLEQGPEGSETP) is disordered. Ser-6 is subject to Phosphoserine. Residues 25–360 (PIQVVLRVRP…LRYASRAQRI (336 aa)) form the Kinesin motor domain. 104–111 (GQTGSGKT) contacts ATP. The residue at position 369 (Ser-369) is a Phosphoserine. The stretch at 376 to 465 (QQVENELLRL…QVHDLERRLL (90 aa)) forms a coiled coil. 2 disordered regions span residues 531–561 (GHISQSVWPPPWAPPPSPGSAKPPRERSQSD) and 579–642 (PSAP…LSSC). Residues 538–548 (WPPPWAPPPSP) are compositionally biased toward pro residues. Polar residues predominate over residues 610–642 (TLTQQINSSLHLSQRQPQPSEDTQSPGQGLSSC). Ser-634 is subject to Phosphoserine.

Belongs to the TRAFAC class myosin-kinesin ATPase superfamily. Kinesin family. In terms of tissue distribution, expressed in the liver.

It is found in the cytoplasm. It localises to the cytoskeleton. This chain is Kinesin-like protein KIF12 (Kif12), found in Mus musculus (Mouse).